Here is a 131-residue protein sequence, read N- to C-terminus: Fatty acid-binding protein (131 aa).

(5Z,8Z,11Z,14Z)-eicosatetraenoate contacts are provided by residues Arg-106 and 126–128 (RFY). (9Z)-octadecenoate contacts are provided by residues Arg-106 and 126 to 128 (RFY).

It belongs to the calycin superfamily. Fatty-acid binding protein (FABP) family.

It localises to the cytoplasm. FABPs are thought to play a role in the intracellular transport of long-chain fatty acids and their acyl-CoA esters. The sequence is that of Fatty acid-binding protein from Tyrophagus putrescentiae (Mold mite).